Consider the following 220-residue polypeptide: Protein-L-isoaspartate O-methyltransferase (220 aa).

S68 is a catalytic residue.

The protein belongs to the methyltransferase superfamily. L-isoaspartyl/D-aspartyl protein methyltransferase family.

Its subcellular location is the cytoplasm. It carries out the reaction [protein]-L-isoaspartate + S-adenosyl-L-methionine = [protein]-L-isoaspartate alpha-methyl ester + S-adenosyl-L-homocysteine. In terms of biological role, catalyzes the methyl esterification of L-isoaspartyl residues in peptides and proteins that result from spontaneous decomposition of normal L-aspartyl and L-asparaginyl residues. It plays a role in the repair and/or degradation of damaged proteins. The protein is Protein-L-isoaspartate O-methyltransferase of Dictyoglomus turgidum (strain DSM 6724 / Z-1310).